The chain runs to 132 residues: Small ribosomal subunit protein uS19 (132 aa).

This sequence belongs to the universal ribosomal protein uS19 family. In terms of assembly, part of the 30S ribosomal subunit.

Its function is as follows. Protein S19 forms a complex with S13 that binds strongly to the 16S ribosomal RNA. The protein is Small ribosomal subunit protein uS19 of Pyrococcus furiosus (strain ATCC 43587 / DSM 3638 / JCM 8422 / Vc1).